Consider the following 195-residue polypeptide: Probable GTP-binding protein EngB (195 aa).

An EngB-type G domain is found at 24-195 (ELPEIALAGR…EAWDAILEKL (172 aa)). GTP is bound by residues 32–39 (GRSNVGKS), 59–63 (GKTQL), 77–80 (DVPG), 144–147 (TKAD), and 176–178 (FSS). 2 residues coordinate Mg(2+): Ser-39 and Thr-61.

It belongs to the TRAFAC class TrmE-Era-EngA-EngB-Septin-like GTPase superfamily. EngB GTPase family. Requires Mg(2+) as cofactor.

Necessary for normal cell division and for the maintenance of normal septation. This Streptococcus pneumoniae (strain Hungary19A-6) protein is Probable GTP-binding protein EngB.